The following is a 460-amino-acid chain: Ribulose bisphosphate carboxylase (460 aa).

Asparagine 112 serves as a coordination point for substrate. Lysine 167 serves as the catalytic Proton acceptor. Lysine 169 is a substrate binding site. Mg(2+) contacts are provided by lysine 192, aspartate 194, and glutamate 195. Lysine 192 is modified (N6-carboxylysine). Histidine 288 (proton acceptor) is an active-site residue. Residues arginine 289, histidine 322, and serine 369 each contribute to the substrate site.

This sequence belongs to the RuBisCO large chain family. Type II subfamily. As to quaternary structure, homodimer. It depends on Mg(2+) as a cofactor.

The catalysed reaction is 2 (2R)-3-phosphoglycerate + 2 H(+) = D-ribulose 1,5-bisphosphate + CO2 + H2O. The enzyme catalyses D-ribulose 1,5-bisphosphate + O2 = 2-phosphoglycolate + (2R)-3-phosphoglycerate + 2 H(+). In terms of biological role, ruBisCO catalyzes two reactions: the carboxylation of D-ribulose 1,5-bisphosphate, the primary event in carbon dioxide fixation, as well as the oxidative fragmentation of the pentose substrate. Both reactions occur simultaneously and in competition at the same active site. The polypeptide is Ribulose bisphosphate carboxylase (Rhodopseudomonas palustris (strain BisA53)).